Consider the following 125-residue polypeptide: Small ribosomal subunit protein bS6 (125 aa).

Residues 96–125 form a disordered region; that stretch reads ETGASSMMKTVEREEARKASQAEFAAANER. Residues 105 to 115 show a composition bias toward basic and acidic residues; it reads TVEREEARKAS.

The protein belongs to the bacterial ribosomal protein bS6 family.

Its function is as follows. Binds together with bS18 to 16S ribosomal RNA. The polypeptide is Small ribosomal subunit protein bS6 (Paracidovorax citrulli (strain AAC00-1) (Acidovorax citrulli)).